The chain runs to 469 residues: Probable Xaa-Pro aminopeptidase PEPP (469 aa).

The Mn(2+) site is built by aspartate 265, aspartate 276, glutamate 399, and glutamate 439.

It belongs to the peptidase M24B family. Mn(2+) serves as cofactor.

The enzyme catalyses Release of any N-terminal amino acid, including proline, that is linked to proline, even from a dipeptide or tripeptide.. Its function is as follows. Catalyzes the removal of a penultimate prolyl residue from the N-termini of peptides. In Coccidioides posadasii (strain RMSCC 757 / Silveira) (Valley fever fungus), this protein is Probable Xaa-Pro aminopeptidase PEPP (PEPP).